A 644-amino-acid chain; its full sequence is Tubulin--tyrosine ligase-like protein 12 (644 aa).

A compositionally biased stretch (basic and acidic residues) spans methionine 1–glutamate 13. Residues methionine 1 to alanine 25 are disordered. Residues proline 300–valine 644 enclose the TTL domain. ATP contacts are provided by residues serine 450–isoleucine 453, lysine 468, and aspartate 470.

This sequence belongs to the tubulin--tyrosine ligase family. Interacts with MAVS; the interaction prevents MAVS binding to TBK1 and IKBKE. Interacts (via N-terminus) with TBK1 (via protein kinase domain). Interacts (via TTL domain) with IKBKE (via protein kinase domain). Interacts with tubulin alpha. Interacts with histone H3 and histone H4 (when trimethylated at 'Lys-20' (H4K20me3)). Interacts with CBX3. Expressed in the basal layer of prostate and endothelial cells. Increased expression in prostatic intraepithelial neoplasia and metastatic lesions.

The protein localises to the cytoplasm. Its subcellular location is the midbody. It is found in the cytoskeleton. The protein resides in the microtubule organizing center. It localises to the centrosome. The protein localises to the spindle. Its subcellular location is the nucleus. Negatively regulates post-translational modifications of tubulin, including detyrosination of the C-terminus and polyglutamylation of glutamate residues. Also, indirectly promotes histone H4 trimethylation at 'Lys-20' (H4K20me3). Probably by controlling tubulin and/or histone H4 post-translational modifications, plays a role in mitosis and in maintaining chromosome number stability. During RNA virus-mediated infection, acts as a negative regulator of the RIG-I pathway by preventing MAVS binding to TBK1 and IKBKE. The sequence is that of Tubulin--tyrosine ligase-like protein 12 (TTLL12) from Homo sapiens (Human).